The sequence spans 300 residues: N-acetylmuramic acid 6-phosphate etherase 2 (300 aa).

The SIS domain occupies 57–220 (ITAAFANGGR…TTGAMIRSGK (164 aa)). The active-site Proton donor is the Glu85. Glu116 is an active-site residue.

The protein belongs to the GCKR-like family. MurNAc-6-P etherase subfamily. As to quaternary structure, homodimer.

The enzyme catalyses N-acetyl-D-muramate 6-phosphate + H2O = N-acetyl-D-glucosamine 6-phosphate + (R)-lactate. The protein operates within amino-sugar metabolism; 1,6-anhydro-N-acetylmuramate degradation. It participates in amino-sugar metabolism; N-acetylmuramate degradation. Its pathway is cell wall biogenesis; peptidoglycan recycling. Its function is as follows. Specifically catalyzes the cleavage of the D-lactyl ether substituent of MurNAc 6-phosphate, producing GlcNAc 6-phosphate and D-lactate. Together with AnmK, is also required for the utilization of anhydro-N-acetylmuramic acid (anhMurNAc) either imported from the medium or derived from its own cell wall murein, and thus plays a role in cell wall recycling. In Vibrio parahaemolyticus serotype O3:K6 (strain RIMD 2210633), this protein is N-acetylmuramic acid 6-phosphate etherase 2.